The chain runs to 437 residues: Elongation factor 1-gamma (437 aa).

Ala2 bears the N-acetylalanine mark. The GST N-terminal domain occupies 2–87; that stretch reads AAGTLYTYPE…YVSNEELRGS (86 aa). A GST C-terminal domain is found at 88–216; the sequence is TPEAAAQVVQ…VKLCEKMAQF (129 aa). N6-acetyllysine occurs at positions 147 and 212. The span at 221 to 254 shows a compositional bias: basic and acidic residues; it reads FAETQPKKDTPRKEKGSREEKQKPQAERKEEKKA. Residues 221–268 are disordered; it reads FAETQPKKDTPRKEKGSREEKQKPQAERKEEKKAAAPAPEEEMDECEQ. Lys253 is covalently cross-linked (Glycyl lysine isopeptide (Lys-Gly) (interchain with G-Cter in SUMO1)). Positions 276–437 constitute an EF-1-gamma C-terminal domain; that stretch reads AKDPFAHLPK…KAFNQGKIFK (162 aa). Residue Lys285 forms a Glycyl lysine isopeptide (Lys-Gly) (interchain with G-Cter in SUMO2) linkage. Lys401 is subject to N6-acetyllysine. Lys434 carries the post-translational modification N6-acetyllysine; alternate. An N6-malonyllysine; alternate modification is found at Lys434.

As to quaternary structure, EF-1 is composed of four subunits: alpha, beta, delta, and gamma. In terms of tissue distribution, highly expressed in pancreatic tumor tissue and to a lesser extent in normal kidney, intestine, pancreas, stomach, lung, brain, spleen and liver.

Its function is as follows. Probably plays a role in anchoring the complex to other cellular components. The polypeptide is Elongation factor 1-gamma (EEF1G) (Homo sapiens (Human)).